The chain runs to 325 residues: Aldose 1-epimerase (325 aa).

Position 73–74 (73–74) interacts with substrate; that stretch reads NR. Histidine 177 acts as the Proton donor in catalysis. Aspartate 230 contributes to the substrate binding site. Glutamate 283 serves as the catalytic Proton acceptor.

This sequence belongs to the aldose epimerase family.

The catalysed reaction is alpha-D-glucose = beta-D-glucose. Its pathway is carbohydrate metabolism; hexose metabolism. The protein is Aldose 1-epimerase (galM) of Bacillus subtilis (strain 168).